The following is a 130-amino-acid chain: Sigma-w pathway protein YsdB (130 aa).

A helical transmembrane segment spans residues 2-22; that stretch reads FVMVLRIILLALFAYCIYAVV.

Its subcellular location is the membrane. Its function is as follows. May mediate a negative feedback loop that down-regulates the expression of the sigma-W regulon following the activation of sigma-W in response to conditions of cell envelope stress. Might interact with and inhibit the activity of the protease PrsW, or could bind to the anti-sigma-W factor RsiW and thereby protect it from PrsW-mediated cleavage. This chain is Sigma-w pathway protein YsdB (ysdB), found in Bacillus subtilis (strain 168).